The sequence spans 306 residues: Protoheme IX farnesyltransferase (306 aa).

9 consecutive transmembrane segments (helical) span residues 28–48, 53–73, 105–125, 127–147, 156–176, 182–202, 227–244, 246–266, and 283–303; these read LGLV…AIML, FLSS…IMAG, ASIL…LFTI, IETG…YSVW, TIIG…AIEP, AWML…ALAI, LSML…FFMQ, LGTV…LLAI, and FVYS…VTLI.

The protein belongs to the UbiA prenyltransferase family. Protoheme IX farnesyltransferase subfamily. Interacts with CtaA.

The protein resides in the cell membrane. It carries out the reaction heme b + (2E,6E)-farnesyl diphosphate + H2O = Fe(II)-heme o + diphosphate. It functions in the pathway porphyrin-containing compound metabolism; heme O biosynthesis; heme O from protoheme: step 1/1. Converts heme B (protoheme IX) to heme O by substitution of the vinyl group on carbon 2 of heme B porphyrin ring with a hydroxyethyl farnesyl side group. The protein is Protoheme IX farnesyltransferase of Macrococcus caseolyticus (strain JCSC5402) (Macrococcoides caseolyticum).